The sequence spans 287 residues: 4-hydroxybenzoate octaprenyltransferase (287 aa).

Transmembrane regions (helical) follow at residues 35–55 (FAAGGLPDLKVFIIFVIGVVV), 96–116 (LFGVMGLFAFSLVLMLNPLVV), 211–231 (IIAAFQLAALSCFIIAGMLAG), 235–255 (IYGLGILAFIGFAVYQQKLIY), and 262–282 (CFTAFLNNNWAGMVLYIALTL).

It belongs to the UbiA prenyltransferase family. It depends on Mg(2+) as a cofactor.

The protein resides in the cell inner membrane. It carries out the reaction all-trans-octaprenyl diphosphate + 4-hydroxybenzoate = 4-hydroxy-3-(all-trans-octaprenyl)benzoate + diphosphate. It participates in cofactor biosynthesis; ubiquinone biosynthesis. Its function is as follows. Catalyzes the prenylation of para-hydroxybenzoate (PHB) with an all-trans polyprenyl group. Mediates the second step in the final reaction sequence of ubiquinone-8 (UQ-8) biosynthesis, which is the condensation of the polyisoprenoid side chain with PHB, generating the first membrane-bound Q intermediate 3-octaprenyl-4-hydroxybenzoate. This Shewanella halifaxensis (strain HAW-EB4) protein is 4-hydroxybenzoate octaprenyltransferase.